We begin with the raw amino-acid sequence, 1522 residues long: Lysophospholipase nte1 (1522 aa).

Residues 1–24 are disordered; sequence MADGVTQVDSTGLHSFSPSPSLSS. At 1–65 the chain is on the cytoplasmic side; it reads MADGVTQVDS…LPPVPTTMAG (65 aa). Low complexity predominate over residues 15 to 24; that stretch reads SFSPSPSLSS. Residues 66-86 traverse the membrane as a helical segment; sequence WIGWVFSFFFQVIPSVLYWII. Topologically, residues 87 to 108 are lumenal; it reads TFSTITLPTWLFTLFSMSLTFT. A helical transmembrane segment spans residues 109 to 129; the sequence is MNFTTLLLIVLAVVSTISWFI. Residues 130–1522 lie on the Cytoplasmic side of the membrane; that stretch reads RYRFLNMYSR…RTLAPRRASI (1393 aa). Disordered regions lie at residues 308–384, 523–544, and 757–776; these read VPNS…SVHP, RAAT…GVSP, and TTTA…SRRR. The segment covering 369 to 381 has biased composition (basic residues); it reads ESRKHSSRKRRKS. Residues 680 to 800 and 840 to 960 contribute to the a nucleoside 3',5'-cyclic phosphate site; these read GGTS…AVAS and RLTS…IAQR. Positions 1219-1383 constitute a PNPLA domain; it reads LVLGGGGARG…IDNLTVDHMK (165 aa). The GXGXXG motif lies at 1223–1228; sequence GGGARG. The GXSXG motif lies at 1250–1254; the sequence is GTSIG. Serine 1252 functions as the Nucleophile in the catalytic mechanism. Aspartate 1370 functions as the Proton acceptor in the catalytic mechanism. The DGA/G signature appears at 1370–1372; sequence DGG. The disordered stretch occupies residues 1501–1522; sequence LPEETEEKKKLQRTLAPRRASI.

It belongs to the NTE family.

The protein localises to the endoplasmic reticulum membrane. The enzyme catalyses a 1-acyl-sn-glycero-3-phosphocholine + H2O = sn-glycerol 3-phosphocholine + a fatty acid + H(+). Inhibited by organophosphorus esters. Intracellular phospholipase B that catalyzes the double deacylation of phosphatidylcholine (PC) to glycerophosphocholine (GroPCho). Plays an important role in membrane lipid homeostasis. Responsible for the rapid PC turnover in response to inositol, elevated temperatures, or when choline is present in the growth medium. The sequence is that of Lysophospholipase nte1 (nte1) from Aspergillus fumigatus (strain ATCC MYA-4609 / CBS 101355 / FGSC A1100 / Af293) (Neosartorya fumigata).